A 62-amino-acid chain; its full sequence is Photosystem II reaction center protein Z (62 aa).

2 helical membrane passes run 8–28 and 41–61; these read AVFA…VVLA and FSGA…NSFV.

It belongs to the PsbZ family. As to quaternary structure, PSII is composed of 1 copy each of membrane proteins PsbA, PsbB, PsbC, PsbD, PsbE, PsbF, PsbH, PsbI, PsbJ, PsbK, PsbL, PsbM, PsbT, PsbY, PsbZ, Psb30/Ycf12, at least 3 peripheral proteins of the oxygen-evolving complex and a large number of cofactors. It forms dimeric complexes.

The protein resides in the plastid. It localises to the chloroplast thylakoid membrane. May control the interaction of photosystem II (PSII) cores with the light-harvesting antenna, regulates electron flow through the 2 photosystem reaction centers. PSII is a light-driven water plastoquinone oxidoreductase, using light energy to abstract electrons from H(2)O, generating a proton gradient subsequently used for ATP formation. The chain is Photosystem II reaction center protein Z from Zygnema circumcarinatum (Green alga).